A 655-amino-acid polypeptide reads, in one-letter code: Golgi integral membrane protein 4 (655 aa).

Gly-2 carries the N-myristoyl glycine lipid modification. At 2 to 12 (GNGMCSRKQKR) the chain is on the cytoplasmic side. A helical; Signal-anchor for type II membrane protein transmembrane segment spans residues 13–33 (IFQTLLLLTVVFGFLYGAMLY). At 34–655 (LELQTQLRKA…AEKSHRRAEM (622 aa)) the chain is on the lumenal side. The interval 38–107 (TQLRKAEAVA…ETLNKGRQDS (70 aa)) is golgi targeting. A coiled-coil region spans residues 66-216 (EHRSRLEKSL…KQLKDTLNRI (151 aa)). An endosome targeting region spans residues 80-175 (LEHKKAKEDF…QELSKLKETV (96 aa)). The interval 122 to 145 (KSQHEELRKQHSDLEEEHRKQGED) is disordered. Residues 123–145 (SQHEELRKQHSDLEEEHRKQGED) show a composition bias toward basic and acidic residues. The segment at 176–220 (YNLREENRQLRKAHQDIHTQLQDVKTQVAEYKQLKDTLNRIPSFR) is golgi targeting. A glycan (N-linked (GlcNAc...) asparagine) is linked at Asn-229. Disordered regions lie at residues 256-275 (QPNHEAGPRRMEEKPLSSMQ) and 285-655 (EQNQ…RAEM). Composition is skewed to basic and acidic residues over residues 261–270 (AGPRRMEEKP), 290–307 (EPREPEERQVEEEHRKAL), 319–328 (EHLEEEHDPS), and 348–360 (LDGHPQAEVEHST). Ser-328 carries the phosphoserine modification. Polar residues predominate over residues 361–370 (KAATNFQSPY). Over residues 381–398 (ARRDEEAQRLREHQEALH) the composition is skewed to basic and acidic residues. 2 stretches are compositionally biased toward low complexity: residues 399–423 (QQRLHGQLLRQQQQQQFLAREMAQQ) and 433–442 (QQHQEQLRQQ). Positions 468 to 508 (AYDRDNQRQDEAEGDPGNRQELREPGHQEGDPEVEADRAAV) are enriched in basic and acidic residues. Ser-540 carries the phosphoserine modification. Residues 567-589 (QQEDNVDEQYQDEGEEEVQEDLT) show a composition bias toward acidic residues. At Tyr-576 the chain carries Phosphotyrosine. At Thr-589 the chain carries Phosphothreonine. Residues 590–620 (EEKKREMEHNVEETYGEHPDDKNNDGEEQGV) are compositionally biased toward basic and acidic residues. Position 633 is a phosphotyrosine (Tyr-633). The span at 633-642 (YEEEEDEEDG) shows a compositional bias: acidic residues.

Belongs to the GOLIM4 family. Phosphorylated by c-AMP-dependent kinases most probably in its lumenal part. In terms of processing, O-glycosylated; modified by sialic acid residues. Post-translationally, N-glycosylated; N-glycans are of the complex type and modified by sialic acid residues. Expressed by spermatozoa (at protein level).

Its subcellular location is the golgi apparatus. It localises to the golgi stack membrane. The protein resides in the endosome membrane. The protein localises to the membrane. Functionally, plays a role in endosome to Golgi protein trafficking; mediates protein transport along the late endosome-bypass pathway from the early endosome to the Golgi. The polypeptide is Golgi integral membrane protein 4 (Golim4) (Mus musculus (Mouse)).